A 404-amino-acid chain; its full sequence is DNA gyrase subunit B (404 aa).

One can recognise a Toprim domain in the interval 321–404; sequence SEIYIVEGDS…VIIMTDADVD (84 aa). Mg(2+) is bound by residues E327, D400, and D402.

Belongs to the type II topoisomerase GyrB family. As to quaternary structure, heterotetramer, composed of two GyrA and two GyrB chains. In the heterotetramer, GyrA contains the active site tyrosine that forms a transient covalent intermediate with DNA, while GyrB binds cofactors and catalyzes ATP hydrolysis. Requires Mg(2+) as cofactor. Mn(2+) serves as cofactor. It depends on Ca(2+) as a cofactor.

It is found in the cytoplasm. It carries out the reaction ATP-dependent breakage, passage and rejoining of double-stranded DNA.. Functionally, a type II topoisomerase that negatively supercoils closed circular double-stranded (ds) DNA in an ATP-dependent manner to modulate DNA topology and maintain chromosomes in an underwound state. Negative supercoiling favors strand separation, and DNA replication, transcription, recombination and repair, all of which involve strand separation. Also able to catalyze the interconversion of other topological isomers of dsDNA rings, including catenanes and knotted rings. Type II topoisomerases break and join 2 DNA strands simultaneously in an ATP-dependent manner. This chain is DNA gyrase subunit B (gyrB), found in Bacillus mycoides.